The following is a 559-amino-acid chain: MFTETYTLIERVLKACTDETEIALTDGGEHADLASTVAFALAKKRHQAPKVIAEELAVTLAANPELAGIRVEALGPYLNFSFGPKYLEETLKAAVQDNFGTAPTKPVRIVLEHTSANPNGPLHVGHIRNSILGDTLARAFRKAGYRVEVQYYVNDMGRQIAIVAYGFDHLDTGAKPGEKADHHIARVYVAANRDLEANPDKGAEIDERMQLIEKRDPATATQFRELVSRCLDGFKVTMQGLNVKHDRFIWESDFVKIGDMEKVLGRLAKIPQAVPPTEEDGTFSLDLSSCGYKKSYVLRRSDGTSVYAARDLAYHIWKGRNFDRVIDVLGADHKLITGQLVCTLRLIAEKPPEVVHFEFVSLPEGSMSTRAGTFVSADELIEEMQKRAIEEVQVRRPEIPVEERDAIAASVARAAIRYDIIKVSPEKSTVFDWKEALDFDRQSGPYVQYAHARACSILDRAGPFQERYDLLESPYEIALVKHIAKFPSIIESVVRDLRPHMLATYARDLADLFNTFYHYDPVLKGEGPVRESRLTLVLAAEKTLKEVLETLGIDALRSM.

The 'HIGH' region signature appears at 116-126 (ANPNGPLHVGH).

The protein belongs to the class-I aminoacyl-tRNA synthetase family.

The protein resides in the cytoplasm. The catalysed reaction is tRNA(Arg) + L-arginine + ATP = L-arginyl-tRNA(Arg) + AMP + diphosphate. In Methanosphaerula palustris (strain ATCC BAA-1556 / DSM 19958 / E1-9c), this protein is Arginine--tRNA ligase.